The following is a 308-amino-acid chain: N-acetyl-gamma-glutamyl-phosphate reductase (308 aa).

The active site involves cysteine 116.

It belongs to the NAGSA dehydrogenase family. Type 2 subfamily.

The protein resides in the cytoplasm. It carries out the reaction N-acetyl-L-glutamate 5-semialdehyde + phosphate + NADP(+) = N-acetyl-L-glutamyl 5-phosphate + NADPH + H(+). It functions in the pathway amino-acid biosynthesis; L-arginine biosynthesis; N(2)-acetyl-L-ornithine from L-glutamate: step 3/4. In terms of biological role, catalyzes the NADPH-dependent reduction of N-acetyl-5-glutamyl phosphate to yield N-acetyl-L-glutamate 5-semialdehyde. This chain is N-acetyl-gamma-glutamyl-phosphate reductase, found in Mesorhizobium japonicum (strain LMG 29417 / CECT 9101 / MAFF 303099) (Mesorhizobium loti (strain MAFF 303099)).